Reading from the N-terminus, the 100-residue chain is Urease subunit gamma (100 aa).

The protein belongs to the urease gamma subunit family. As to quaternary structure, heterotrimer of UreA (gamma), UreB (beta) and UreC (alpha) subunits. Three heterotrimers associate to form the active enzyme.

The protein resides in the cytoplasm. It catalyses the reaction urea + 2 H2O + H(+) = hydrogencarbonate + 2 NH4(+). The protein operates within nitrogen metabolism; urea degradation; CO(2) and NH(3) from urea (urease route): step 1/1. The polypeptide is Urease subunit gamma (Edwardsiella ictaluri (strain 93-146)).